We begin with the raw amino-acid sequence, 722 residues long: Homeobox-leucine zipper protein HDG11 (722 aa).

Positions 1 to 19 (MSFVVGVGGSGSGSGGDGG) are enriched in gly residues. Residues 1-42 (MSFVVGVGGSGSGSGGDGGGSHHHDGSETDRKKKRYHRHTAQ) are disordered. Residues 20–31 (GSHHHDGSETDR) show a composition bias toward basic and acidic residues. A DNA-binding region (homeobox) is located at residues 32–91 (KKKRYHRHTAQQIQRLESSFKECPHPDEKQRNQLSRELGLAPRQIKFWFQNRRTQLKAQH). Residues 81-161 (QNRRTQLKAQ…LERMSTIASK (81 aa)) are a coiled coil. The START domain maps to 227–460 (SDMDKPIMTG…LQRMCERFAS (234 aa)).

This sequence belongs to the HD-ZIP homeobox family. Class IV subfamily. In terms of assembly, interacts with BBM. In terms of tissue distribution, expressed in apical meristems and young epidermal tissue including trichomes and stipules. Expressed in lateral root tips, the L1 layer of apical inflorescence meristems and early flower primordia, carpel and petal epidermis, stigma papillae, ovule primordia, nucellus and embryo.

It is found in the nucleus. In terms of biological role, transcription factor which acts as a positive regulator of drought stress tolerance. Can transactivate CIPK3, NCED3 and ERECTA. Transactivates several cell-wall-loosening protein genes by directly binding to HD motifs in their promoters. These target genes play important roles in coordinating cell-wall extensibility with root development and growth. Transactivates CYP74A/AOS, AOC3, OPR3 and 4CLL5/OPCL1 genes by directly binding to HD motifs in their promoters. These target genes are involved in jasmonate (JA) biosynthesis, and JA signaling affects root architecture by activating auxin signaling, which promotes lateral root formation. Acts as a negative regulator of trichome branching. Required for the establishment of giant cell identity on the abaxial side of sepals. Seems to promote cell differentiation. May regulate cell differentiation and proliferation during root and shoot meristem development. This is Homeobox-leucine zipper protein HDG11 from Arabidopsis thaliana (Mouse-ear cress).